Reading from the N-terminus, the 56-residue chain is MAFDKKLLEIVACPVCKGKLEFDKQAQTLNCKFDKLAFPITEGIPVLLENRAQPLS.

Belongs to the UPF0434 family.

The polypeptide is UPF0434 protein Sden_2197 (Shewanella denitrificans (strain OS217 / ATCC BAA-1090 / DSM 15013)).